The primary structure comprises 646 residues: Alkyl/aryl-sulfatase BDS1 (646 aa).

M1 is modified (N-acetylmethionine). 7 residues coordinate Zn(2+): H162, H164, D166, H167, E273, E292, and H337.

It belongs to the metallo-beta-lactamase superfamily. Type III sulfatase family. It depends on Zn(2+) as a cofactor.

Functionally, alkyl/aryl-sulfatase. Enables the use of SDS and 4-nitrocatechol as sulfur source. This is Alkyl/aryl-sulfatase BDS1 (BDS1) from Saccharomyces cerevisiae (strain ATCC 204508 / S288c) (Baker's yeast).